An 84-amino-acid polypeptide reads, in one-letter code: Exodeoxyribonuclease 7 small subunit (84 aa).

Belongs to the XseB family. As to quaternary structure, heterooligomer composed of large and small subunits.

The protein localises to the cytoplasm. The enzyme catalyses Exonucleolytic cleavage in either 5'- to 3'- or 3'- to 5'-direction to yield nucleoside 5'-phosphates.. Functionally, bidirectionally degrades single-stranded DNA into large acid-insoluble oligonucleotides, which are then degraded further into small acid-soluble oligonucleotides. This chain is Exodeoxyribonuclease 7 small subunit, found in Bacillus velezensis (strain DSM 23117 / BGSC 10A6 / LMG 26770 / FZB42) (Bacillus amyloliquefaciens subsp. plantarum).